Here is a 540-residue protein sequence, read N- to C-terminus: Beta-2-syntrophin (540 aa).

The interval 73 to 114 (LPNGGGAGDSLPGSPSRGLGPPSPPAPPRGPAGEAGASPPVR) is disordered. Residues 81–92 (DSLPGSPSRGLG) show a composition bias toward low complexity. The segment covering 93–102 (PPSPPAPPRG) has biased composition (pro residues). Residues Ser-95, Ser-110, Ser-129, Ser-211, Ser-222, Ser-233, Ser-393, and Ser-395 each carry the phosphoserine modification. Low complexity predominate over residues 103–112 (PAGEAGASPP). Residues 115-198 (RVRVVKQEAG…EVLLEVKFIR (84 aa)) form the PDZ domain. PH domains are found at residues 163-300 (ILSV…TNIM) and 325-437 (EVKH…QGCH). Residues 220–240 (PQSPSFSGSEDSGSPKHQNST) form a disordered region. Residues 222-231 (SPSFSGSEDS) show a composition bias toward low complexity. Residues 484–540 (PFERLKMSADDGIRNLYLDFGGPEGELTMDLHSCPKPIVFVLHTFLSAKVTRMGLLV) enclose the SU domain. Positions 518-540 (PKPIVFVLHTFLSAKVTRMGLLV) are calmodulin-binding.

This sequence belongs to the syntrophin family. As to quaternary structure, monomer and homodimer. Interacts with the other members of the syntrophin family: SNTA1 and SNTB1; and with the sodium channel proteins SCN4A and SCN5A. Interacts with SAST, MAST205, microtubules and microtubule-associated proteins. Interacts with the dystrophin protein DMD and related proteins DTNA and UTRN, and with the neuroregulin receptor ERBB4. Interacts with PTPRN when phosphorylated, protecting PTPRN from protein cleavage by CAPN1. Dephosphorylation upon insulin stimulation disrupts the interaction with PTPRN and results in the cleavage of PTPRN. Interacts with DTNB. In terms of processing, phosphorylated. Partially dephosphorylated upon insulin stimulation. Ubiquitous. Isoform 1 is the predominant isoform. Weak level of isoform 2 is present in all tested tissues, except in liver and heart where it is highly expressed.

The protein resides in the membrane. It is found in the cytoplasmic vesicle. Its subcellular location is the secretory vesicle membrane. It localises to the cell junction. The protein localises to the cytoplasm. The protein resides in the cytoskeleton. Its function is as follows. Adapter protein that binds to and probably organizes the subcellular localization of a variety of membrane proteins. May link various receptors to the actin cytoskeleton and the dystrophin glycoprotein complex. May play a role in the regulation of secretory granules via its interaction with PTPRN. This chain is Beta-2-syntrophin (SNTB2), found in Homo sapiens (Human).